The primary structure comprises 341 residues: Probable long-chain-alcohol O-fatty-acyltransferase 9 (341 aa).

The next 7 helical transmembrane spans lie at 9-29, 36-56, 82-102, 122-142, 146-166, 231-251, and 295-315; these read IIVW…SANI, LFSV…FSSV, GPLF…CFPI, FAIK…SHFL, VLLS…LGPL, MGYL…YFYI, and RLLT…PLFI.

This sequence belongs to the wax synthase family.

The protein localises to the membrane. It catalyses the reaction a long chain fatty alcohol + a fatty acyl-CoA = a wax ester + CoA. In terms of biological role, catalyzes the final step in the synthesis of long-chain linear esters (waxes). In Arabidopsis thaliana (Mouse-ear cress), this protein is Probable long-chain-alcohol O-fatty-acyltransferase 9.